The following is a 387-amino-acid chain: 3-ketoacyl-CoA thiolase (387 aa).

The Acyl-thioester intermediate role is filled by C91. Active-site proton acceptor residues include H343 and C373.

Belongs to the thiolase-like superfamily. Thiolase family. In terms of assembly, heterotetramer of two alpha chains (FadB) and two beta chains (FadA).

Its subcellular location is the cytoplasm. It carries out the reaction an acyl-CoA + acetyl-CoA = a 3-oxoacyl-CoA + CoA. Its pathway is lipid metabolism; fatty acid beta-oxidation. Functionally, catalyzes the final step of fatty acid oxidation in which acetyl-CoA is released and the CoA ester of a fatty acid two carbons shorter is formed. Involved in the aerobic and anaerobic degradation of long-chain fatty acids. This is 3-ketoacyl-CoA thiolase from Escherichia coli O6:H1 (strain CFT073 / ATCC 700928 / UPEC).